The sequence spans 440 residues: Xylose isomerase (440 aa).

Active-site residues include histidine 101 and aspartate 104. Glutamate 232, glutamate 268, histidine 271, aspartate 296, aspartate 307, aspartate 309, and aspartate 339 together coordinate Mg(2+).

The protein belongs to the xylose isomerase family. In terms of assembly, homotetramer. Mg(2+) serves as cofactor.

The protein localises to the cytoplasm. It carries out the reaction alpha-D-xylose = alpha-D-xylulofuranose. This chain is Xylose isomerase, found in Enterobacter sp. (strain 638).